The primary structure comprises 595 residues: NADH-quinone oxidoreductase subunit C/D (595 aa).

Residues Met-1–Gln-186 form an NADH dehydrogenase I subunit C region. The NADH dehydrogenase I subunit D stretch occupies residues Asp-210–Arg-595.

The protein in the N-terminal section; belongs to the complex I 30 kDa subunit family. This sequence in the C-terminal section; belongs to the complex I 49 kDa subunit family. NDH-1 is composed of 13 different subunits. Subunits NuoB, CD, E, F, and G constitute the peripheral sector of the complex.

The protein localises to the cell inner membrane. It catalyses the reaction a quinone + NADH + 5 H(+)(in) = a quinol + NAD(+) + 4 H(+)(out). NDH-1 shuttles electrons from NADH, via FMN and iron-sulfur (Fe-S) centers, to quinones in the respiratory chain. The immediate electron acceptor for the enzyme in this species is believed to be ubiquinone. Couples the redox reaction to proton translocation (for every two electrons transferred, four hydrogen ions are translocated across the cytoplasmic membrane), and thus conserves the redox energy in a proton gradient. The sequence is that of NADH-quinone oxidoreductase subunit C/D from Acinetobacter baylyi (strain ATCC 33305 / BD413 / ADP1).